Here is a 424-residue protein sequence, read N- to C-terminus: Glutamyl-tRNA reductase (424 aa).

Substrate-binding positions include T49–R52, S107, E112–Q114, and Q118. The active-site Nucleophile is C50. Position 187–192 (G187–I192) interacts with NADP(+).

It belongs to the glutamyl-tRNA reductase family. In terms of assembly, homodimer.

It carries out the reaction (S)-4-amino-5-oxopentanoate + tRNA(Glu) + NADP(+) = L-glutamyl-tRNA(Glu) + NADPH + H(+). It participates in porphyrin-containing compound metabolism; protoporphyrin-IX biosynthesis; 5-aminolevulinate from L-glutamyl-tRNA(Glu): step 1/2. Its function is as follows. Catalyzes the NADPH-dependent reduction of glutamyl-tRNA(Glu) to glutamate 1-semialdehyde (GSA). This Chromohalobacter salexigens (strain ATCC BAA-138 / DSM 3043 / CIP 106854 / NCIMB 13768 / 1H11) protein is Glutamyl-tRNA reductase.